The primary structure comprises 158 residues: Protein-export protein SecB (158 aa).

The protein belongs to the SecB family. In terms of assembly, homotetramer, a dimer of dimers. One homotetramer interacts with 1 SecA dimer.

The protein resides in the cytoplasm. Functionally, one of the proteins required for the normal export of preproteins out of the cell cytoplasm. It is a molecular chaperone that binds to a subset of precursor proteins, maintaining them in a translocation-competent state. It also specifically binds to its receptor SecA. The protein is Protein-export protein SecB of Pectobacterium atrosepticum (strain SCRI 1043 / ATCC BAA-672) (Erwinia carotovora subsp. atroseptica).